The following is a 91-amino-acid chain: MKTIFFFITFIVLVSSCTSNIMTKSISQVKSQFFSPALSPNVDPADEHIGHSPDDMKIIFCQQCAFHCIEKKKNIGNCENSICRCTLEDIL.

A signal peptide spans 1-19 (MKTIFFFITFIVLVSSCTS). 3 disulfides stabilise this stretch: Cys61–Cys78, Cys64–Cys83, and Cys68–Cys85.

Belongs to the DEFL family.

The protein resides in the secreted. This Arabidopsis thaliana (Mouse-ear cress) protein is Defensin-like protein 220.